A 666-amino-acid polypeptide reads, in one-letter code: Fructose-1,6-bisphosphatase class 3 (666 aa).

This sequence belongs to the FBPase class 3 family. Requires Mn(2+) as cofactor.

The catalysed reaction is beta-D-fructose 1,6-bisphosphate + H2O = beta-D-fructose 6-phosphate + phosphate. The protein operates within carbohydrate biosynthesis; gluconeogenesis. The chain is Fructose-1,6-bisphosphatase class 3 from Phocaeicola vulgatus (strain ATCC 8482 / DSM 1447 / JCM 5826 / CCUG 4940 / NBRC 14291 / NCTC 11154) (Bacteroides vulgatus).